The sequence spans 754 residues: uncharacterized protein (754 aa).

Catalysis depends on charge relay system residues serine 585 and histidine 707. The tract at residues 733–754 (SHAPPPSRKARSAARRSTDPVR) is disordered.

It belongs to the peptidase S9A family.

This is an uncharacterized protein from Sinorhizobium fredii (strain NBRC 101917 / NGR234).